A 157-amino-acid polypeptide reads, in one-letter code: Large ribosomal subunit protein bL17 (157 aa).

Positions Ala124–Glu157 are disordered.

This sequence belongs to the bacterial ribosomal protein bL17 family. As to quaternary structure, part of the 50S ribosomal subunit. Contacts protein L32.

This chain is Large ribosomal subunit protein bL17, found in Chlorobaculum tepidum (strain ATCC 49652 / DSM 12025 / NBRC 103806 / TLS) (Chlorobium tepidum).